Reading from the N-terminus, the 318-residue chain is Transaldolase (318 aa).

The active-site Schiff-base intermediate with substrate is Lys-132.

Belongs to the transaldolase family. Type 1 subfamily. As to quaternary structure, homodimer.

The protein localises to the cytoplasm. The enzyme catalyses D-sedoheptulose 7-phosphate + D-glyceraldehyde 3-phosphate = D-erythrose 4-phosphate + beta-D-fructose 6-phosphate. It participates in carbohydrate degradation; pentose phosphate pathway; D-glyceraldehyde 3-phosphate and beta-D-fructose 6-phosphate from D-ribose 5-phosphate and D-xylulose 5-phosphate (non-oxidative stage): step 2/3. Its function is as follows. Transaldolase is important for the balance of metabolites in the pentose-phosphate pathway. This chain is Transaldolase, found in Shewanella baltica (strain OS195).